The following is a 368-amino-acid chain: GTPase Obg (368 aa).

In terms of domain architecture, Obg spans 1 to 159 (MQFIDQAEIE…RQLRLELKLL (159 aa)). One can recognise an OBG-type G domain in the interval 160-328 (AEVGIIGLPN…LMQLVWQWLD (169 aa)). GTP is bound by residues 166–173 (GLPNAGKS), 191–195 (FTTLV), 213–216 (DIPG), 280–283 (NKID), and 309–311 (SAA). Residues Ser173 and Thr193 each contribute to the Mg(2+) site.

It belongs to the TRAFAC class OBG-HflX-like GTPase superfamily. OBG GTPase family. Monomer. The cofactor is Mg(2+).

The protein resides in the cytoplasm. Functionally, an essential GTPase which binds GTP, GDP and possibly (p)ppGpp with moderate affinity, with high nucleotide exchange rates and a fairly low GTP hydrolysis rate. Plays a role in control of the cell cycle, stress response, ribosome biogenesis and in those bacteria that undergo differentiation, in morphogenesis control. In Synechocystis sp. (strain ATCC 27184 / PCC 6803 / Kazusa), this protein is GTPase Obg.